The sequence spans 1063 residues: Presequence protease, mitochondrial (1063 aa).

The N-terminal 33 residues, 1–33 (MLRLANRVSRKDSGNLGIAQLKKRLLATSGVSQ), are a transit peptide targeting the mitochondrion. His105 is a Zn(2+) binding site. Glu108 serves as the catalytic Proton acceptor. A Zn(2+)-binding site is contributed by His109. Glu181 is an active-site residue. Glu206 serves as a coordination point for Zn(2+).

Belongs to the peptidase M16 family. PreP subfamily. Monomer and homodimer; homodimerization is induced by binding of the substrate. The cofactor is Zn(2+).

The protein localises to the mitochondrion intermembrane space. The protein resides in the mitochondrion matrix. Its function is as follows. Degrades mitochondrial transit peptides after their cleavage in the intermembrane space or in the matrix, and presequence peptides; clearance of these peptides is required to keep the presequence processing machinery running. Preferentially cleaves the N-terminal side of paired basic amino acid residues. Also degrades other unstructured peptides. May function as an ATP-dependent peptidase as opposed to a metalloendopeptidase. This is Presequence protease, mitochondrial (CYM1) from Debaryomyces hansenii (strain ATCC 36239 / CBS 767 / BCRC 21394 / JCM 1990 / NBRC 0083 / IGC 2968) (Yeast).